Here is a 294-residue protein sequence, read N- to C-terminus: Xyloglucan endotransglucosylase protein 34 (294 aa).

Positions 1-22 (MAAAYPWTLFLGMLVMVSGTMG) are cleaved as a signal peptide. Residues 23–221 (AALRKPVDVA…WSKAPFIASY (199 aa)) enclose the GH16 domain. Residue E107 is the Nucleophile of the active site. Residue E111 is the Proton donor of the active site. E111 lines the xyloglucan pocket. N115 carries an N-linked (GlcNAc...) asparagine glycan. Residues 124-126 (QTN), 134-136 (DRE), 200-201 (DW), and G205 each bind xyloglucan. Cystine bridges form between C229–C238 and C275–C288. Residue R280 participates in xyloglucan binding.

The protein belongs to the glycosyl hydrolase 16 family. XTH group 1 subfamily. Contains at least one intrachain disulfide bond essential for its enzymatic activity. Post-translationally, N-glycosylated. Contains N-acetylglucosamine and mannose. Glycosylation is not essential for its catalytic activity. In terms of tissue distribution, expressed in mature gelatinous (G) cell wall layer of the tension wood fibers. Highly expressed in the outer zone of the G layer close to the secondary S2 layer. Not expressed in the mature walls of the ray cells or vessel elements (at protein level). Highest expression in both the phloem/cambium and differentiating xylem of the mature stem containing primarily secondary cell wall forming cells, in root tips and young roots. Expressed at low levels in apical bud.

It is found in the secreted. It localises to the cell wall. Its subcellular location is the extracellular space. The protein resides in the apoplast. The protein localises to the cytoplasm. The enzyme catalyses breaks a beta-(1-&gt;4) bond in the backbone of a xyloglucan and transfers the xyloglucanyl segment on to O-4 of the non-reducing terminal glucose residue of an acceptor, which can be a xyloglucan or an oligosaccharide of xyloglucan.. Its function is as follows. Catalyzes xyloglucan endotransglycosylation (XET). Cleaves and religates xyloglucan polymers. Does not catalyze xyloglucan endohydrolysis (XEH). Involved in early phases of secondary (S) cell wall formation in fibers of the xylem and phloem vascular tissues of wood stems. May play a role in restructuring primary cell walls, possibly creating and reinforcing the connections between the primary and S cell wall layers. Functions in the gelatinous (G) layers of the tension wood fibers that are involved in bending of the wood stems. May play a role in G fiber shrinking by repairing broken xyloglucan cross-links between G and S2 cell wall layers via its XET activity to maintain connections between the layers. This chain is Xyloglucan endotransglucosylase protein 34, found in Populus tremula x Populus tremuloides (Hybrid aspen).